The primary structure comprises 157 residues: MSRRHSAEKRPTEPDPLYGSTVLSKFINKVMESGKKSTARRIVYNAIEKFSKRIKAENPLEAFEQALENAKPSLEVKSRRIGGATYQVPIEIPANRRSSMAMRWIIGHSRGKAGRSMEDALASELSDCYNNQGTTIKKKDDTHRMAEANKAYAHYKW.

The protein belongs to the universal ribosomal protein uS7 family. Part of the 30S ribosomal subunit. Contacts proteins S9 and S11.

In terms of biological role, one of the primary rRNA binding proteins, it binds directly to 16S rRNA where it nucleates assembly of the head domain of the 30S subunit. Is located at the subunit interface close to the decoding center, probably blocks exit of the E-site tRNA. The chain is Small ribosomal subunit protein uS7 from Protochlamydia amoebophila (strain UWE25).